Consider the following 1024-residue polypeptide: Beta-galactosidase (1024 aa).

Residues Asn-103 and Asp-202 each coordinate substrate. Asp-202 serves as a coordination point for Na(+). Mg(2+) is bound by residues Glu-417, His-419, and Glu-462. Substrate-binding positions include Glu-462 and 538 to 541 (EYAH). Glu-462 (proton donor) is an active-site residue. Glu-538 (nucleophile) is an active-site residue. Residue Asn-598 participates in Mg(2+) binding. Na(+) contacts are provided by Phe-602 and Asn-605. Substrate-binding residues include Asn-605 and Trp-1000.

This sequence belongs to the glycosyl hydrolase 2 family. As to quaternary structure, homotetramer. Requires Mg(2+) as cofactor. Na(+) is required as a cofactor.

The catalysed reaction is Hydrolysis of terminal non-reducing beta-D-galactose residues in beta-D-galactosides.. The polypeptide is Beta-galactosidase (Escherichia coli (strain UTI89 / UPEC)).